The primary structure comprises 422 residues: 5'-deoxyadenosine deaminase (422 aa).

Zn(2+)-binding residues include histidine 57 and histidine 59. Glutamate 86 and histidine 178 together coordinate substrate. Histidine 205 contributes to the Zn(2+) binding site. Substrate-binding residues include glutamate 208 and aspartate 294. Position 294 (aspartate 294) interacts with Zn(2+).

The protein belongs to the metallo-dependent hydrolases superfamily. MTA/SAH deaminase family. As to quaternary structure, homotetramer. Requires Zn(2+) as cofactor.

It catalyses the reaction 5'-deoxyadenosine + H2O + H(+) = 5'-deoxyinosine + NH4(+). The enzyme catalyses S-adenosyl-L-homocysteine + H2O + H(+) = S-inosyl-L-homocysteine + NH4(+). It carries out the reaction S-methyl-5'-thioadenosine + H2O + H(+) = S-methyl-5'-thioinosine + NH4(+). The catalysed reaction is adenosine + H2O + H(+) = inosine + NH4(+). It participates in amino-acid biosynthesis; S-adenosyl-L-methionine biosynthesis. Functionally, catalyzes the deamination of three SAM-derived enzymatic products, namely 5'-deoxyadenosine, S-adenosyl-L-homocysteine, and 5'-methylthioadenosine, to produce the inosine analogs. Can also deaminate adenosine. The preferred substrate for this enzyme is 5'-deoxyadenosine, but all these substrates are efficiently deaminated. Likely functions in a S-adenosyl-L-methionine (SAM) recycling pathway from S-adenosyl-L-homocysteine (SAH) produced from SAM-dependent methylation reactions. May also be involved in the recycling of 5'-deoxyadenosine, whereupon the 5'-deoxyribose moiety of 5'-deoxyinosine is further metabolized to deoxyhexoses used for the biosynthesis of aromatic amino acids in methanogens. The polypeptide is 5'-deoxyadenosine deaminase (Methanococcus maripaludis (strain C5 / ATCC BAA-1333)).